The primary structure comprises 216 residues: Ribosomal RNA small subunit methyltransferase G (216 aa).

S-adenosyl-L-methionine contacts are provided by residues glycine 86, leucine 91, 137–138, and arginine 155; that span reads VE.

The protein belongs to the methyltransferase superfamily. RNA methyltransferase RsmG family.

Its subcellular location is the cytoplasm. The enzyme catalyses guanosine(527) in 16S rRNA + S-adenosyl-L-methionine = N(7)-methylguanosine(527) in 16S rRNA + S-adenosyl-L-homocysteine. Its function is as follows. Specifically methylates the N7 position of guanine in position 527 of 16S rRNA. The sequence is that of Ribosomal RNA small subunit methyltransferase G from Lawsonia intracellularis (strain PHE/MN1-00).